The chain runs to 161 residues: Phosphopantetheine adenylyltransferase (161 aa).

S9 provides a ligand contact to substrate. ATP is bound by residues 9–10 (SF) and H17. Substrate-binding residues include K41, T73, and R87. Residues 88-90 (GLR), E98, and 123-129 (YSFISST) each bind ATP.

It belongs to the bacterial CoaD family. As to quaternary structure, homohexamer. Mg(2+) is required as a cofactor.

The protein localises to the cytoplasm. The enzyme catalyses (R)-4'-phosphopantetheine + ATP + H(+) = 3'-dephospho-CoA + diphosphate. It functions in the pathway cofactor biosynthesis; coenzyme A biosynthesis; CoA from (R)-pantothenate: step 4/5. In terms of biological role, reversibly transfers an adenylyl group from ATP to 4'-phosphopantetheine, yielding dephospho-CoA (dPCoA) and pyrophosphate. This Desulforamulus reducens (strain ATCC BAA-1160 / DSM 100696 / MI-1) (Desulfotomaculum reducens) protein is Phosphopantetheine adenylyltransferase.